The sequence spans 118 residues: Small ribosomal subunit protein bS6 (118 aa).

The protein belongs to the bacterial ribosomal protein bS6 family.

Binds together with bS18 to 16S ribosomal RNA. The polypeptide is Small ribosomal subunit protein bS6 (Orientia tsutsugamushi (strain Ikeda) (Rickettsia tsutsugamushi)).